The following is a 669-amino-acid chain: Leucine zipper putative tumor suppressor 2 (669 aa).

Residues 1-25 show a composition bias toward low complexity; sequence MAIVQTLPVPLEPAPEAATAPQAPV. Disordered stretches follow at residues 1 to 56, 92 to 131, 150 to 201, and 215 to 323; these read MAIV…PTFF, NEDFRTESPPSPSSDVEDAREQRAHNAHLRGPPPKLIPVS, PVLP…AADK, and GTLS…SDEA. A required for centrosomal localization region spans residues 1–332; it reads MAIVQTLPVP…ALLHCVLEGK (332 aa). A compositionally biased stretch (polar residues) spans 172–181; the sequence is LSGSQGSLTQ. A compositionally biased stretch (low complexity) spans 187–199; the sequence is ASSSSSSSSSSAA. Over residues 215 to 233 the composition is skewed to polar residues; that stretch reads GTLSDSGRNSLSSLPTYST. 2 stretches are compositionally biased toward low complexity: residues 241–251 and 267–283; these read SSPGGHLPSHG and GPSHSDSGRSSSSKSTG. At Ser-249 the chain carries Phosphoserine. Gly residues predominate over residues 284-295; it reads SLGGRVAGGLLG. Ser-296 carries the post-translational modification Phosphoserine. The segment covering 298-308 has biased composition (polar residues); that stretch reads TRASPDSSSCG. A compositionally biased stretch (pro residues) spans 311-320; the sequence is SPPPPPPPPS. Positions 328 to 649 form a coiled coil; that stretch reads VLEGKLRDRE…LELEARELAD (322 aa). Residues 447 to 669 form a sufficient for interaction with CTNNB1 region; the sequence is SGEISLLKQQ…CLEEITATEI (223 aa). The interval 450–669 is sufficient for interaction with KATNB1 and for inhibition of katanin-mediated microtubule severing; sequence ISLLKQQLKE…CLEEITATEI (220 aa). Residue Ser-570 is modified to Phosphoserine. The short motif at 631–640 is the Nuclear export signal element; it reads LEQELQQLSL.

This sequence belongs to the LZTS2 family. Interacts with KATNB1. Also interacts with CTNNB1, gamma-tubulin and KIF23. Highly expressed in prostate and testis, and at slightly lower levels in spleen, thymus, uterus, small intestine and colon.

It localises to the cytoplasm. It is found in the cytoskeleton. The protein resides in the microtubule organizing center. The protein localises to the centrosome. In terms of biological role, negative regulator of katanin-mediated microtubule severing and release from the centrosome. Required for central spindle formation and the completion of cytokinesis. May negatively regulate axonal outgrowth by preventing the formation of microtubule bundles that are necessary for transport within the elongating axon. Negative regulator of the Wnt signaling pathway. Represses beta-catenin-mediated transcriptional activation by promoting the nuclear exclusion of beta-catenin. This is Leucine zipper putative tumor suppressor 2 from Homo sapiens (Human).